The following is a 182-amino-acid chain: Adenine phosphoribosyltransferase (182 aa).

The protein belongs to the purine/pyrimidine phosphoribosyltransferase family. Homodimer.

Its subcellular location is the cytoplasm. The catalysed reaction is AMP + diphosphate = 5-phospho-alpha-D-ribose 1-diphosphate + adenine. It functions in the pathway purine metabolism; AMP biosynthesis via salvage pathway; AMP from adenine: step 1/1. In terms of biological role, catalyzes a salvage reaction resulting in the formation of AMP, that is energically less costly than de novo synthesis. The chain is Adenine phosphoribosyltransferase from Pseudomonas paraeruginosa (strain DSM 24068 / PA7) (Pseudomonas aeruginosa (strain PA7)).